The primary structure comprises 387 residues: Methylthioribose-1-phosphate isomerase (387 aa).

The active-site Proton donor is D257.

It belongs to the eIF-2B alpha/beta/delta subunits family. MtnA subfamily.

Its subcellular location is the cytoplasm. The protein localises to the nucleus. It carries out the reaction 5-(methylsulfanyl)-alpha-D-ribose 1-phosphate = 5-(methylsulfanyl)-D-ribulose 1-phosphate. It participates in amino-acid biosynthesis; L-methionine biosynthesis via salvage pathway; L-methionine from S-methyl-5-thio-alpha-D-ribose 1-phosphate: step 1/6. Its function is as follows. Catalyzes the interconversion of methylthioribose-1-phosphate (MTR-1-P) into methylthioribulose-1-phosphate (MTRu-1-P). The chain is Methylthioribose-1-phosphate isomerase (mri1) from Neosartorya fischeri (strain ATCC 1020 / DSM 3700 / CBS 544.65 / FGSC A1164 / JCM 1740 / NRRL 181 / WB 181) (Aspergillus fischerianus).